We begin with the raw amino-acid sequence, 179 residues long: Enhancer of split m8 protein (179 aa).

Positions 10–65 (YQKVKKPMLERQRRARMNKCLDNLKTLVAELRGDDGILRMDKAEMLESAVIFMRQQ) constitute a bHLH domain. The 34-residue stretch at 83–116 (FKNGYMNAVNEVSRVMASTPGMSVDLGKSVMTHL) folds into the Orange domain. The tract at residues 146 to 179 (DKAPLSPASSGYHSDCDSPAPSPQPMQQPLWRPW) is disordered. The WRPW motif motif lies at 176-179 (WRPW).

Homodimer. Heterodimers with dpn. Transcription repression requires formation of a complex with a corepressor protein (Groucho).

It localises to the nucleus. Its function is as follows. Participates in the control of cell fate choice by uncommitted neuroectodermal cells in the embryo. Transcriptional repressor. Binds DNA on N-box motifs: 5'-CACNAG-3'. Part of the Notch signaling pathway. This chain is Enhancer of split m8 protein, found in Drosophila melanogaster (Fruit fly).